Here is a 79-residue protein sequence, read N- to C-terminus: Sec-independent protein translocase protein TatA (79 aa).

The chain crosses the membrane as a helical span at residues 1-21 (MGGISIWQLLIIALIVVLLFG). Residues 43–79 (MSSEEDKKALEDTEAAKTAQTTQQATEKKPESNKEQA) form a disordered region. Positions 46–57 (EEDKKALEDTEA) are enriched in basic and acidic residues. The segment covering 58 to 67 (AKTAQTTQQA) has biased composition (low complexity). Over residues 68 to 79 (TEKKPESNKEQA) the composition is skewed to basic and acidic residues.

This sequence belongs to the TatA/E family. The Tat system comprises two distinct complexes: a TatABC complex, containing multiple copies of TatA, TatB and TatC subunits, and a separate TatA complex, containing only TatA subunits. Substrates initially bind to the TatABC complex, which probably triggers association of the separate TatA complex to form the active translocon.

Its subcellular location is the cell inner membrane. Its function is as follows. Part of the twin-arginine translocation (Tat) system that transports large folded proteins containing a characteristic twin-arginine motif in their signal peptide across membranes. TatA could form the protein-conducting channel of the Tat system. The sequence is that of Sec-independent protein translocase protein TatA from Shewanella putrefaciens (strain CN-32 / ATCC BAA-453).